An 81-amino-acid polypeptide reads, in one-letter code: Toxin TdNa10 (81 aa).

Residues 1–20 (MWTFAIVLAFLLIGLDEGEA) form the signal peptide. Residues 21–81 (LDGYPLSKNN…KMYPGELPCH (61 aa)) enclose the LCN-type CS-alpha/beta domain. 4 disulfide bridges follow: C32-C80, C36-C57, C42-C62, and C46-C64.

This sequence belongs to the long (4 C-C) scorpion toxin superfamily. Sodium channel inhibitor family. Beta subfamily. As to expression, expressed by the venom gland.

The protein resides in the secreted. Alpha toxins bind voltage-independently at site-3 of sodium channels (Nav) and inhibit the inactivation of the activated channels, thereby blocking neuronal transmission. This toxin binds, in vitro, to sodium channels and inhibits the inactivation of the activated channels. Seems not toxic to mice, crickets and sweet-water shrimps. In Tityus discrepans (Venezuelan scorpion), this protein is Toxin TdNa10.